A 531-amino-acid chain; its full sequence is Muscarinic acetylcholine receptor M5 (531 aa).

The Extracellular portion of the chain corresponds to 1-28 (MEGESYNESTVNGTPVNHQALERHGLWE). N-linked (GlcNAc...) asparagine glycosylation is present at Asn-7. A helical membrane pass occupies residues 29–52 (VITIAVVTAVVSLMTIVGNVLVMI). The Cytoplasmic portion of the chain corresponds to 53-65 (SFKVNSQLKTVNN). The helical transmembrane segment at 66–86 (YYLLSLACADLIIGIFSMNLY) threads the bilayer. Residues 87 to 103 (TTYILMGRWVLGSLACD) are Extracellular-facing. A disulfide bridge connects residues Cys-102 and Cys-182. The helical transmembrane segment at 104 to 125 (LWLALDYVASNASVMNLLVISF) threads the bilayer. At 126-145 (DRYFSITRPLTYRAKRTPKR) the chain is on the cytoplasmic side. Residues 146-168 (AGIMIGLAWLVSFILWAPAILCW) traverse the membrane as a helical segment. Topologically, residues 169-190 (QYLVGKRTVPPDECQIQFLSEP) are extracellular. The chain crosses the membrane as a helical span at residues 191 to 213 (TITFGTAIAAFYIPVSVMTILYC). At 214–442 (RIYRETEKRT…LVKERKAAQT (229 aa)) the chain is on the cytoplasmic side. Disordered stretches follow at residues 259-295 (SLAQ…DWEK) and 327-346 (EAKE…ETVV). Over residues 267-287 (QASWSSSRRSTSTTGKTTQAT) the composition is skewed to low complexity. Over residues 334 to 346 (KESNTQETKETVV) the composition is skewed to polar residues. The helical transmembrane segment at 443-463 (LSAILLAFIITWTPYNIMVLV) threads the bilayer. Over 464 to 477 (STFCDKCVPVTLWH) the chain is Extracellular. Residues 478–497 (LGYWLCYVNSTINPICYALC) traverse the membrane as a helical segment. Topologically, residues 498–531 (NRTFRKTFKLLLLCRWKKKKVEEKLYWQGNSKLP) are cytoplasmic. A phosphothreonine mark is found at Thr-500 and Thr-504.

It belongs to the G-protein coupled receptor 1 family. Muscarinic acetylcholine receptor subfamily. CHRM5 sub-subfamily.

It localises to the cell membrane. It is found in the postsynaptic cell membrane. In terms of biological role, the muscarinic acetylcholine receptor mediates various cellular responses, including inhibition of adenylate cyclase, breakdown of phosphoinositides and modulation of potassium channels through the action of G proteins. Primary transducing effect is Pi turnover. This Rattus norvegicus (Rat) protein is Muscarinic acetylcholine receptor M5 (Chrm5).